A 356-amino-acid chain; its full sequence is Cyclin-A1-4 (356 aa).

This sequence belongs to the cyclin family. Cyclin AB subfamily.

The protein is Cyclin-A1-4 (CYCA1-4) of Oryza sativa subsp. japonica (Rice).